Here is a 162-residue protein sequence, read N- to C-terminus: tRNA (cytidine(34)-2'-O)-methyltransferase (162 aa).

4 residues coordinate S-adenosyl-L-methionine: leucine 83, glycine 105, isoleucine 127, and serine 135.

It belongs to the class IV-like SAM-binding methyltransferase superfamily. RNA methyltransferase TrmH family. TrmL subfamily. Homodimer.

Its subcellular location is the cytoplasm. The catalysed reaction is cytidine(34) in tRNA + S-adenosyl-L-methionine = 2'-O-methylcytidine(34) in tRNA + S-adenosyl-L-homocysteine + H(+). It carries out the reaction 5-carboxymethylaminomethyluridine(34) in tRNA(Leu) + S-adenosyl-L-methionine = 5-carboxymethylaminomethyl-2'-O-methyluridine(34) in tRNA(Leu) + S-adenosyl-L-homocysteine + H(+). Its function is as follows. Methylates the ribose at the nucleotide 34 wobble position in the two leucyl isoacceptors tRNA(Leu)(CmAA) and tRNA(Leu)(cmnm5UmAA). Catalyzes the methyl transfer from S-adenosyl-L-methionine to the 2'-OH of the wobble nucleotide. This Yersinia pestis protein is tRNA (cytidine(34)-2'-O)-methyltransferase.